The chain runs to 262 residues: Thrombin-like enzyme gyroxin B1.4 (262 aa).

The signal sequence occupies residues 1–18 (MVLIRVLANLLILQLSYA). A propeptide spanning residues 19 to 262 (QKSSELVIGG…AGNTIVNCPP (244 aa)) is cleaved from the precursor. Residues 25-253 (VIGGDECNIN…HLDWIQSIIA (229 aa)) form the Peptidase S1 domain. 6 disulfides stabilise this stretch: C31–C165, C52–C68, C102–C260, C144–C214, C176–C193, and C204–C229. H67 acts as the Charge relay system in catalysis. N-linked (GlcNAc...) asparagine glycosylation is present at N105. D112 acts as the Charge relay system in catalysis. Catalysis depends on S208, which acts as the Charge relay system.

This sequence belongs to the peptidase S1 family. Snake venom subfamily. As to quaternary structure, monomer. As to expression, expressed by the venom gland.

Its subcellular location is the secreted. Its function is as follows. Thrombin-like snake venom serine protease. Displays a specificity similar to trypsin. Releases only fibrinopeptide A in the conversion of fibrinogen to fibrin. Shows coagulant, esterase and amidase activities. Reversibly increases the permeability of the blood brain barrier (BBB) in mice. Induces the barrel rotation syndrome in mice, which is manifested by gyroxin-like, rapid rolling motions. This syndrome may be due to its effect on BBB permeability, and certainly also to other actions affecting endogenous substrates present in the endothelium, nervous tissues or blood. The sequence is that of Thrombin-like enzyme gyroxin B1.4 from Crotalus durissus terrificus (South American rattlesnake).